We begin with the raw amino-acid sequence, 708 residues long: Caprin-1 (708 aa).

Composition is skewed to low complexity over residues 1–15 and 22–37; these read MPSA…SKSS and GSSG…APAS. The interval 1–48 is disordered; sequence MPSATSHSGSGSKSSGPPPPSGSSGNEAGAGAAAPASQHPMTGTGAVQ. P2 bears the N-acetylproline mark. S10 carries the phosphoserine modification. Positions 58–92 form a coiled coil; sequence VIDKKLRNLEKKKGKLDDYQERMNKGERLNQDQLD. S113 bears the Phosphoserine mark. Positions 123 to 151 form a coiled coil; it reads KTIKKTARREQLMREEAEQKRLKTVLELQ. Position 163 is an omega-N-methylarginine (R163). Residues 258 to 287 form a disordered region; sequence EEAASAPTVEDQAAEAEPEPVEEYTEQNEV. Acidic residues predominate over residues 269 to 287; the sequence is QAAEAEPEPVEEYTEQNEV. Residues S333 and S341 each carry the phosphoserine modification. The tract at residues 358-379 is G3BP1-binding; that stretch reads QDLMAQMQGPYNFIQDSMLDFE. The span at 415 to 452 shows a compositional bias: polar residues; that stretch reads LAQPNQVSVQPEATQVPLVSSTSEGYTASQPLYQPSHA. 4 disordered regions span residues 415–459, 473–497, 521–559, and 571–708; these read LAQP…RPQK, TDQT…GTSK, NAPV…QTEL, and YHGS…QQVN. 2 stretches are compositionally biased toward low complexity: residues 475-489 and 535-559; these read QTTA…SQPQ and QQNQ…QTEL. Polar residues predominate over residues 572-603; that stretch reads HGSQDQPHQVTGNHQQPPQQNTGFPRSNQPYY. The residue at position 623 (Y623) is a Phosphotyrosine. An omega-N-methylarginine mark is found at R624 and R631. Residues Y634 and Y637 each carry the phosphotyrosine modification. R638 is modified (omega-N-methylarginine). Positions 640–656 are enriched in polar residues; it reads SFSTNTPNSGYTQSQFS. O-linked (GlcNAc) serine glycans are attached at residues S642 and S648. Phosphotyrosine occurs at positions 650, 661, 664, and 669. 2 stretches are compositionally biased toward low complexity: residues 675–685 and 696–708; these read RGSGQSGPRGA and NRGM…QQVN. R697 bears the Asymmetric dimethylarginine; alternate mark. R697 is subject to Omega-N-methylarginine; alternate.

It belongs to the caprin family. As to quaternary structure, may form homomultimers. Interacts with G3BP1; interaction is direct and promotes stress granule formation. Interacts with G3BP2; interaction is direct and promotes stress granule formation. Interacts with PQBP1. Interacts with DDX3X. Interacts (when phosphorylated by EPHA4) with FMR1; interaction with FMR1 promotes formation of a membraneless compartment. Tyrosine phosphorylation by EPHA4 promotes interaction with FMR1 and liquid-liquid phase separation (LLPS) for the formation of a membraneless compartment that concentrates mRNAs with associated regulatory factors. Post-translationally, O-glycosylated (O-GlcNAcylated), in a cell cycle-dependent manner. O-glycosylation by OGT inhibit ability to undergo liquid-liquid phase separation (LLPS).

The protein resides in the cytoplasm. The protein localises to the cytoplasmic ribonucleoprotein granule. It is found in the cytosol. Its subcellular location is the cell projection. It localises to the dendrite. The protein resides in the lamellipodium. Ability to mediate liquid-liquid phase separation is regulated by ATP: moderate concentrations of ATP enhance phase separation, whereas high concentrations of ATP lead to inhibition of phase separation. In terms of biological role, mRNA-binding protein that acts as a regulator of mRNAs transport, translation and/or stability, and which is involved in neurogenesis, synaptic plasticity in neurons and cell proliferation and migration in multiple cell types. Plays an essential role in cytoplasmic stress granule formation. Acts as an mRNA regulator by mediating formation of some phase-separated membraneless compartment: undergoes liquid-liquid phase separation upon binding to target mRNAs, leading to assemble mRNAs into cytoplasmic ribonucleoprotein granules that concentrate mRNAs with associated regulatory factors. Undergoes liquid-liquid phase separation following phosphorylation and interaction with FMR1, promoting formation of cytoplasmic ribonucleoprotein granules that concentrate mRNAs with factors that inhibit translation and mediate deadenylation of target mRNAs. In these cytoplasmic ribonucleoprotein granules, CAPRIN1 mediates recruitment of CNOT7 deadenylase, leading to mRNA deadenylation and degradation. Binds directly and selectively to MYC and CCND2 mRNAs. In neuronal cells, directly binds to several mRNAs associated with RNA granules, including BDNF, CAMK2A, CREB1, MAP2, NTRK2 mRNAs, as well as to GRIN1 and KPNB1 mRNAs, but not to rRNAs. The sequence is that of Caprin-1 (CAPRIN1) from Bos taurus (Bovine).